We begin with the raw amino-acid sequence, 512 residues long: Ascofuranone/ascochlorin biosynthesis clusters transcription regulator (512 aa).

Residues 14-49 constitute a DNA-binding region (zn(2)-C6 fungal-type); sequence CDRCHSQKLRCPRSVEPEKANPEEPCSRCRKAGVPC. 3 disordered regions span residues 54–87, 118–148, and 325–351; these read RGKVGRPSKATKKKSARSPRATSTPEAEFPPYDI, GSGSVTTSASPKTMAEDYQPEGQRPFPDPLM, and GCTRSSSRASTTSKGSSMESDEGDGSI. Residues 56–70 are compositionally biased toward basic residues; sequence KVGRPSKATKKKSAR. 2 stretches are compositionally biased toward low complexity: residues 118 to 127 and 327 to 342; these read GSGSVTTSAS and TRSSSRASTTSKGSSM.

Its subcellular location is the nucleus. Transcription factor that regulates the expression of the asc-1 and asc-2 gene clusters that mediate the biosynthesis of both ascochlorin and ascofuranone, a strong inhibitor of cyanide-insensitive alternative oxidases and a promising drug candidate against African trypanosomiasis. Binds the 5'-CGGYGNNTTW-3' motif within promoters of the target genes. The polypeptide is Ascofuranone/ascochlorin biosynthesis clusters transcription regulator (Acremonium egyptiacum (Oospora egyptiaca)).